The sequence spans 2410 residues: Reducing polyketide synthase FUB1 (2410 aa).

Over residues 1–42 the composition is skewed to low complexity; the sequence is MTLSNGSNGANGTSNGNGAHPSANGFHNAANGGANNGSANGG. The tract at residues 1-52 is disordered; it reads MTLSNGSNGANGTSNGNGAHPSANGFHNAANGGANNGSANGGAEHDAGRPQV. Residues 57 to 479 form the Ketosynthase family 3 (KS3) domain; that stretch reads SSAIAVIGVS…GANAHAVLDD (423 aa). Residues C230, H365, and H403 each act as for beta-ketoacyl synthase activity in the active site. A malonyl-CoA:ACP transacylase (MAT) domain region spans residues 608 to 929; the sequence is TFIFTGQGAQ…FSAIKRKQDA (322 aa). Catalysis depends on S699, which acts as the For malonyltransferase activity. Residues 994-1127 are N-terminal hotdog fold; that stretch reads LELLGVRDPR…GLVSTSYKHD (134 aa). In terms of domain architecture, PKS/mFAS DH spans 994–1307; the sequence is LELLGVRDPR…TVPLRGASDS (314 aa). Residues 995 to 1302 form a dehydratase (DH) domain region; it reads ELLGVRDPRS…LKGCKTVPLR (308 aa). H1026 (proton acceptor; for dehydratase activity) is an active-site residue. The interval 1155 to 1307 is C-terminal hotdog fold; sequence LPSVDPTVFY…TVPLRGASDS (153 aa). D1220 acts as the Proton donor; for dehydratase activity in catalysis. The tract at residues 1714-2026 is enoyl reductase (ER) domain; it reads GLLDTLEYLS…SGGHVGKIVL (313 aa). The tract at residues 2050–2226 is ketoreductase (KR) domain; the sequence is ATYVLIGGLG…AATSINLSLV (177 aa). The region spanning 2329–2406 is the Carrier domain; it reads EVYEIVLQQL…GFTKKVMAKS (78 aa). The residue at position 2366 (S2366) is an O-(pantetheine 4'-phosphoryl)serine.

Its pathway is mycotoxin biosynthesis. Reducing polyketide synthase; part of the gene cluster that mediates the biosynthesis of fusaric acid, a mycotoxin with low to moderate toxicity to animals and humans, but with high phytotoxic properties. L-aspartate is suggested as fusaric acid amino acid precursor that is activated and further processed to O-acetyl-L-homoserine by cluster enzymes aspartate kinase FUB3 and homoserine O-acetyltransferase FUB5, as well as enzymes of the primary metabolism. The polyketide synthase (PKS) FUB1 generates the triketide trans-2-hexenal which is presumptively released by the hydrolase FUB4 and linked to the NRPS-bound amino acid precursor by NAD(P)-dependent dehydrogenase FUB6. FUB1, FUB4, and the non-canonical NRPS Fub8 may form an enzyme complex. Further processing of the NRPS-bound intermediate might be carried out by FUB6 and the sulfhydrylase FUB7, enabling a spontaneous electrocyclization to close the carbon backbone of fusaric acid. Dihydrofusaric acid is likely to be released via reduction by the thioester reductase (TR) domain of FUB8 whereupon the final oxidation to fusaric acid may (also) be performed by the FMN-dependent dehydrogenase FUB9. This chain is Reducing polyketide synthase FUB1, found in Gibberella fujikuroi (strain CBS 195.34 / IMI 58289 / NRRL A-6831) (Bakanae and foot rot disease fungus).